Reading from the N-terminus, the 361-residue chain is MTDILSPLAYLCGKPTAKAKLKALPEHFQVNEVLGYSLTGHGEHLMVRIRKTGENTSFVANELAKACGVPSRAVSWAGLKDRHAVTEQWLSVHLPNGETPDFSAFLAQYPSIEILEVTRHDKKLRPGDLQGNEFVVTLSEVSDVAAVLSRLETVAELGVPNYFGSQRFGRHGNNLSEARRWGRDNVRSRNQNQRSLYLSAARSWIFNQIVSKRIEQGCFARFIEGDIALAEQQMFNVDGDLALWDQRLQAGEVAISAALAGDNALPTSGQALPLEQAELDAEPDLMALIRGNRMRHDRRAIALKAQNLSWQVQEDQITLRFSLDAGSFATSLVRELIEEIPVVRHYDQGHEQESRDSESED.

Catalysis depends on D81, which acts as the Nucleophile. A TRUD domain is found at 158-303; the sequence is GVPNYFGSQR…MRHDRRAIAL (146 aa).

This sequence belongs to the pseudouridine synthase TruD family.

It carries out the reaction uridine(13) in tRNA = pseudouridine(13) in tRNA. In terms of biological role, responsible for synthesis of pseudouridine from uracil-13 in transfer RNAs. In Vibrio cholerae serotype O1 (strain ATCC 39541 / Classical Ogawa 395 / O395), this protein is tRNA pseudouridine synthase D.